An 89-amino-acid polypeptide reads, in one-letter code: Small ribosomal subunit protein uS15 (89 aa).

The protein belongs to the universal ribosomal protein uS15 family. In terms of assembly, part of the 30S ribosomal subunit. Forms a bridge to the 50S subunit in the 70S ribosome, contacting the 23S rRNA.

In terms of biological role, one of the primary rRNA binding proteins, it binds directly to 16S rRNA where it helps nucleate assembly of the platform of the 30S subunit by binding and bridging several RNA helices of the 16S rRNA. Functionally, forms an intersubunit bridge (bridge B4) with the 23S rRNA of the 50S subunit in the ribosome. This is Small ribosomal subunit protein uS15 from Salinispora arenicola (strain CNS-205).